The chain runs to 555 residues: Putative ankyrin repeat protein L283 (555 aa).

ANK repeat units lie at residues 364–389 (TKVN…EDDI), 390–420 (VFKK…DINE), 422–447 (IKLA…KVRC), and 455–488 (GYLE…EGGK).

This Acanthamoeba polyphaga mimivirus (APMV) protein is Putative ankyrin repeat protein L283.